Here is a 238-residue protein sequence, read N- to C-terminus: Sugar fermentation stimulation protein homolog (238 aa).

It belongs to the SfsA family.

The protein is Sugar fermentation stimulation protein homolog of Histophilus somni (strain 129Pt) (Haemophilus somnus).